The chain runs to 562 residues: Probable sesquiterpene synthase (562 aa).

Positions 315, 319, and 467 each coordinate Mg(2+). The DDXXD motif motif lies at 315 to 319 (DDIYD).

This sequence belongs to the terpene synthase family. Tpsa subfamily. The cofactor is Mg(2+). Mn(2+) is required as a cofactor.

Sesquiterpene synthase. The polypeptide is Probable sesquiterpene synthase (SesquiTPS) (Santalum spicatum (Australian sandalwood)).